We begin with the raw amino-acid sequence, 4080 residues long: MAPSQAPREPIAIVGSGCRFPGESSSPSKLWELLQAPRDVQTEIPPTRFNPHGFYHPDNLHHGTSNVRHSYLLTEDHRHFDAQFFGIKPAEAHCIDPQQRLLMETVYESLESAGLRLEDLRGSETAVYVGLMCGDYADIVLRDPESFPMYLSTGTARSIMSNRISYFFDWHGPSMTIDTACSSSLVAVHEAVQTLRLGRSRVAVAAGSNLCLSPEPYIAESKLQMLSPTGRSRMWDIQADGYARGDGVAAVVLKTLSAALADGDHIECLIRETSVNQDGRTRGITMPSSEAQTRLIQDTYARAGLDPMKPQERCQYFEAHGTGTPTGDPLEAAAIRQAFFPGDNNQDRGCLFVGSIKTVVGHTEGTAGLAGVLKASLALRNGIIPPNLLFNQLNPKIKPFYTNLEIATAAKPWPVLPAGVPRRASVNSFGFGGTNAHAIIEAYEPALTAPSKSTEPDIAFIPFVFSAASESALRRMLELYAQHLSKNPTINARDLGWTLQARRSRFPFSIAVPGATTDQLRSNLETRLNSTDARQPLKIVKQESRPENPRILGVFTGQGAQWATMGRALYQSPKVRQIIQELDASLQALPIGERPSWTLASELTADASVSRIKAAEISQPMCTAVQVVLVQLLQSAGVVFDAVVGHSSGEIAAAYAAGFLSGTDAIRIAYYRGLCARLAQGAHGEKGAMMAVGTGVEDALELCAEPEFRGRMSVAAVNSSASVTLSGDADAITQAKEILDEEKKFARVLVVDKAYHSHHMQACSGRYLSCLAKARIAVSAPTDTKCVWYSTVRQGPVTEADLADLTGPYWNDNMVSPVLFAQAVETALAARGPFNMAVEVGPHPALRGPAQQTVQDVLETSLPYTPTLQRGMNDVEAMAECLGLLWQGLAPGFVDLSSYDAFLSQGAVSRVIKDLPRYSWDHDRVFWYESRVSRATRQRIAASHPILGTRCPDGVEQEFRWRNFLSLKELPWLTGHRIQGQIIFPGAGYISAAVDSARAMSSNESIQLVELQELLIRQAIVFEDENASVEILVSITDVTHHSKDMVRAQFSFYSAVGKESTQMTLNASGRLVITYGPVRKDALPVQRPSLVDMVDVPSERFYNALDPLGYSYTGRFRALKSMQRKLGIATGLVTRQEAADLSSVTLDPAMLDAAIQAVLLAKSFPGDGELWCSQVPKVIHRIAVNPTLCDPSGNGVESTFPLDAVLTMMKASDTQGDVDVYSADGQYTMIRMEGIHAVPLEATNADRDRPFFSGVVWGPAAPDSQTVNFDATATPEEYELAYVLERVATFYLRKIHLAFPMDHSARHEGPYVGLLNYATYVTQQVASGYHRYTQPHWARDTVAVIKSESQRFPNNIDLAVMHIIGEHMVDVISTRATILEHLTKDNLLSRYYEQAMGIGHFSDYLASVVEQIVHRYPQMKVLEIGAGTGMATKKVIQRVGHSFGSYTFTDISSGFFENAREIFASHQDQMVYKVLDAEKDPVAQGFGEQSYDLIVASFVLHATSHLETTLHNLRRLLKPGGYVVMLEVTNLEQSRLGYIFGSLPGWWLGANDGRILSPCVPTEEWDRLLKLTGFSGVDTFTSDADALPYPASAIVSQAVDETVDFLRNPLGTPSDFVNRATPVVLIGGASSSVRVIRDVVKRHLDTRFDQVQVVDRLSDFVAISPAVSNGLLTLNLSDLEEPVFQNMTADSLAALKLLYERSNYVLWVTEDARAGNPHQNQSLGFGRSMMVEMPHVQSQFLDLDRITETSSVASRIVDAALRFVGVNMPDRGGDVASAGLLWSTEPEIAVIGGRELLPRIKLNRSQNLRYNASRRAIAEDVDMDQKSVQLVRNGNAYVLEQGSTSGFGNQTPGYTRIRVDVSSLKSLHLGRGNALYLVAGTVLATGEKVIGFADKNSSIVDIPPSWMSHRPDISMAALILSIIARLFSRAILSSISPGGVLVVAEPDELLAPVLEWQASQQKIRVVFVTTQEDAPERPNWVVLHSQVHVRSLPKLAPTEPVTILDLSTGEEPSALALKLRNSLHPASAFERLTYWFSDHARRGEIHIPAEAMLTMYRPPMSPPASDSVIASHSFPVTDVSQIPAARCPLAVVDWQSTSHVPALIRPVDHYPMLKSNKTYWLVGLTGSLGLSLCAWMIHQGAQNVVLTSRNPKIDQIILQELRSLGARVEVYAGDVTNQESLRGVYDRICQTLPPVAGVGQGAMVLIDTMIKDMEIDAMQSVLQPKVKGSINLDELFSAERPLDFFIFFSSATCVTGNIGQSNYAAANMFMTGLAANRNRRGLAGSVMNIGAIMGVGYVTRETSEALQRNLLKSGHVWMSEQDFHTIFAEAILAGTPGSDANVEITCGLRITNASEEQRPLWSFNPRFQHLVVMEEQVEETYEQDKKGMSLKLQLREARTTDEIYEVIKECFIVKLQIMLGLDDAATNSITSKAADDLGIDSLNTVEIRSWFLKEMKVDIPVLRILGGATIGEIIKFVLEKLPSDMTPSLGLSPPTGAASKATSQPNPKPKVVVERRNVPRLEKKIVHSAGSRTSSSVTGTSKSVSPARSMDTASSQTSEAASPSIHTEEITKPLKPLAPLLKADVVSSNLGKVITPVEQTAALSVRKEPLSFGQSRFWFLKLYLEDQTTFNITCLLRMTGPLSVDSLSRAVTAVGQRHEALRTCFTVEDGQSPVQTILPESTLKLERQEYRTMADVNTATKKLTQHVYEMESGRLMRVILLSSAPNSSVHYVLVGYHHINMDGVSLEVFLHDLEKAYRGQPLSSDLLQYPDYAAKQRQERNQGAWQDDLTFWKNEMVGSNLEIPLLPLASVAIRKPLTQYRHHRVEQRLDARLGAQIRQLCQSIKATPSHFYLATFTTLLARLTRTREIWVGMADANRIQAETADSIGNYLNLLALRMQYDPDQPFVASVQAARKKSYGALAHSRIPFDVLLSELQVPRSSTHSPLFQVFMDYRHDVREKRMFGDCQLEGVEYEMGRTAYDIALDVVDTADDGPLIIMGLQESLYSPDTAQMLLNSFLEMVRAFAQDSKQPGGHVSLFSASDLEKALALGNGSVVASQWPATLSHRIDDMAKQYPQKLALNDGDNLRLTFQQMSQRADSIASALLSANVSRQQRVAVFQHPSSDCICSILAILRIGATYVPLDLRLELARLGSIVQDCEPTVFLVDSHTQSQAPDLMLTRPAMTINIADLPRIAPFPVMNRAAAEDEAVILYTSGSTGNPKGVPLTHENLRVNIEGNQAEFQFGPDDCLLQQIAFSFDFSVWQIFMALANGASLFIAPSTHRGDPVALMDLVVREDITITGATPSEYRSWFQHGDLARLKTSQWKTAVSAGEAMTTNMIRDFQALNKSDLRLVNGYGPTEASMSSNKLVVPYLTNKDHPEEWMEKGAVVAGYTAPNYSIYIVDEAMNLLPIGLPGQILIGGPGIASGYLNNKELSCIRFINDKYASPEQRACGWRWAHLTGDRGRIGADGRLRIEGRIEGDTQVKLRGYRIDLQDVEAAMLKASPGAFKDLVVSLHQSTQALVAHVVFSQHYPAHKHSQALEIKSLELPRYMWPARTVSIDQMPVTVHGKLDRKALQTMDLPAIEPMKQTSTAHLNEAQAQMVQLWEEVISKDILAAHHIVAESDFFAVGGTSMLLVDLQRQIKSWFKMEIALAELFSANTLEKMALLIKPQEDIATPAAVDAAPPSSPSPLALTASLPPAPTTINWSEEVQLPRVLREQTSSGTTVSVPEKTSGLRLVLTGATGFIGQALLQQLTANPAISTVHCIAVRDPSAIPAHEKILVHAGDLTHAALGLAPAEAQAIFREVDAVIHNGADVSFMKSYHSLRRTNVESTIALIQNSLSRQIPFHYISSSGIANLAGTTTFAEVSAASFIPPTDGSQGYLATKWVSERLLEEAHREFGLPVYIHRPSSVTGSNAPPLDLMDNLMTYARRLKAVPMPERSSWKGYLDFVPVEQVVRDVTGDVLSAAGTVPSARASKVHYIHHLGRQVSLTGLHRYLERETGAVYRVLKMGEWLEEATQVGMDALLRTYLESMDKEDVKVVFPRLVAGKRHASTVGVAKGVKIGESWLEKGKTLLFSW.

In terms of domain architecture, Ketosynthase family 3 (KS3) spans 8–442 (REPIAIVGSG…GTNAHAIIEA (435 aa)). Active-site for beta-ketoacyl synthase activity residues include Cys-181, His-320, and His-362. The segment at 554 to 878 (VFTGQGAQWA…QRGMNDVEAM (325 aa)) is malonyl-CoA:ACP transacylase (MAT) domain. The segment at 944-1078 (HPILGTRCPD…GRLVITYGPV (135 aa)) is N-terminal hotdog fold. A PKS/mFAS DH domain is found at 944–1246 (HPILGTRCPD…AVPLEATNAD (303 aa)). Residues 945 to 1243 (PILGTRCPDG…GIHAVPLEAT (299 aa)) are dehydratase (DH) domain. His-976 functions as the Proton acceptor; for dehydratase activity in the catalytic mechanism. The C-terminal hotdog fold stretch occupies residues 1093–1246 (MVDVPSERFY…AVPLEATNAD (154 aa)). Asp-1152 (proton donor; for dehydratase activity) is an active-site residue. Residues 1400–1585 (HFSDYLASVV…GVDTFTSDAD (186 aa)) form a methyltransferase (MT) domain region. A ketoreductase (KR)domain region spans residues 2118–2292 (TYWLVGLTGS…AGSVMNIGAI (175 aa)). Residues 2399–2478 (TTDEIYEVIK…TIGEIIKFVL (80 aa)) are peptidyl carrier protein. In terms of domain architecture, Carrier 1 spans 2405 to 2481 (EVIKECFIVK…EIIKFVLEKL (77 aa)). Position 2441 is an O-(pantetheine 4'-phosphoryl)serine (Ser-2441). The disordered stretch occupies residues 2488 to 2569 (SLGLSPPTGA…AASPSIHTEE (82 aa)). Positions 2511–2525 (VVVERRNVPRLEKKI) are enriched in basic and acidic residues. A compositionally biased stretch (low complexity) spans 2528–2545 (SAGSRTSSSVTGTSKSVS). Residues 2551–2565 (DTASSQTSEAASPSI) show a composition bias toward polar residues. Positions 2607–3036 (KEPLSFGQSR…DSKQPGGHVS (430 aa)) are condensation. The interval 3069–3478 (DMAKQYPQKL…DGRLRIEGRI (410 aa)) is adenylation. One can recognise a Carrier 2 domain in the interval 3593–3673 (AHLNEAQAQM…KMALLIKPQE (81 aa)). Residues 3598 to 3670 (AQAQMVQLWE…TLEKMALLIK (73 aa)) are thiolation. Ser-3633 is subject to O-(pantetheine 4'-phosphoryl)serine. Residues 3740–3959 (LTGATGFIGQ…DFVPVEQVVR (220 aa)) are reductase (RED) domain.

The protein in the C-terminal section; belongs to the NRP synthetase family.

It functions in the pathway secondary metabolite biosynthesis. In terms of biological role, hybrid PKS-NRPS synthetase; part of the gene cluster that mediates the biosynthesis of oxaleimides, cytotoxic compounds containing an unusual disubstituted succinimide moiety. The first step of the pathway is provided by the HR-PKS poxF that serves in a new mode of collaborative biosynthesis with the PKS-NRPS poxE, by providing the olefin containing amino acid substrate via the synthesis of an ACP-bound dec-4-enoate. The cytochrome P450 monooxygenase poxM-catalyzed oxidation at the alpha-position creates the enzyme-bound 2-hydroxydec-4-enoyl-ACP thioester, which may be prone to spontaneous hydrolysis to yield 2-hydroxydec-4-enoic acid due to increased electrophilicity of the carbonyl. 2-hydroxydec-4-enoic acid can then be further oxidized by poxM to yield the alpha-ketoacid 2-oxodec-4-enoicacid, which is reductively aminated by the aminotransferase poxL to yield (S,E)-2-aminodec-4-enoic acid. The Hybrid PKS-NRPS synthetase poxE then performs condensation between the octaketide product of its PKS modules and the amino group of (S,E)-2-aminodec-4-enoic acid which is activated and incorporated by the adenylation domain. The resulting aminoacyl product can be cyclized by the Diels-Alderase PoxQ and reductively released by the reductive (R) domain of poxE to yield an aldehyde intermediate. The released aldehyde is then substrate for a Knoevenagel condensation by the hydrolyase poxO followed by an oxidation at the 5-position of the pyrrolidone ring. The presence of the olefin from the amino acid building block allows for migration of the substituted allyl group to occur. This allylic transposition reaction takes place in a conjugate addition, semipinacol-like fashion to yield a succinimide intermediate. Iterative two-electron oxidations of the C7 methyl of the succinimide intermediate to the carboxylic acid can be catalyzed by one of two remaining cytochrome P450 monooxygenasess poxC or poxD to yield oxaleimide A. Subsequent oxidation yields the maleimide scaffold oxaleimide I. Both oxaleimide A and oxaleimide I can undergo oxidative modifications in the decalin ring to yield the series of products oxaleimides B to H. In Penicillium oxalicum (strain 114-2 / CGMCC 5302) (Penicillium decumbens), this protein is Hybrid PKS-NRPS synthetase poxE.